Here is a 114-residue protein sequence, read N- to C-terminus: Immunoglobulin kappa variable 6D-21 (114 aa).

The N-terminal stretch at 1–19 is a signal peptide; sequence MSPSQLIGFLLLWVPASRG. A framework-1 region spans residues 20-42; it reads EIVLTQSPDFQSVTPKEKVTITC. Positions 20–114 constitute an Ig-like domain; it reads EIVLTQSPDF…YYCHQSSSLP (95 aa). C42 and C107 form a disulfide bridge. A complementarity-determining-1 region spans residues 43 to 53; it reads RASQSIGSSLH. Residues 54 to 68 form a framework-2 region; sequence WYQQKPDQSPKLLIK. The tract at residues 69–75 is complementarity-determining-2; that stretch reads YASQSIS. The interval 76 to 107 is framework-3; that stretch reads GVPSRFSGSGSGTDFTLTINSLEAEDAAAYYC. The tract at residues 108–114 is complementarity-determining-3; the sequence is HQSSSLP.

As to quaternary structure, immunoglobulins are composed of two identical heavy chains and two identical light chains; disulfide-linked.

The protein localises to the secreted. It is found in the cell membrane. V region of the variable domain of immunoglobulin light chains that participates in the antigen recognition. Immunoglobulins, also known as antibodies, are membrane-bound or secreted glycoproteins produced by B lymphocytes. In the recognition phase of humoral immunity, the membrane-bound immunoglobulins serve as receptors which, upon binding of a specific antigen, trigger the clonal expansion and differentiation of B lymphocytes into immunoglobulins-secreting plasma cells. Secreted immunoglobulins mediate the effector phase of humoral immunity, which results in the elimination of bound antigens. The antigen binding site is formed by the variable domain of one heavy chain, together with that of its associated light chain. Thus, each immunoglobulin has two antigen binding sites with remarkable affinity for a particular antigen. The variable domains are assembled by a process called V-(D)-J rearrangement and can then be subjected to somatic hypermutations which, after exposure to antigen and selection, allow affinity maturation for a particular antigen. In Homo sapiens (Human), this protein is Immunoglobulin kappa variable 6D-21.